The primary structure comprises 202 residues: ATP-dependent Clp protease proteolytic subunit (202 aa).

Catalysis depends on S106, which acts as the Nucleophile. Residue H131 is part of the active site.

It belongs to the peptidase S14 family. In terms of assembly, fourteen ClpP subunits assemble into 2 heptameric rings which stack back to back to give a disk-like structure with a central cavity, resembling the structure of eukaryotic proteasomes.

The protein resides in the cytoplasm. The catalysed reaction is Hydrolysis of proteins to small peptides in the presence of ATP and magnesium. alpha-casein is the usual test substrate. In the absence of ATP, only oligopeptides shorter than five residues are hydrolyzed (such as succinyl-Leu-Tyr-|-NHMec, and Leu-Tyr-Leu-|-Tyr-Trp, in which cleavage of the -Tyr-|-Leu- and -Tyr-|-Trp bonds also occurs).. In terms of biological role, cleaves peptides in various proteins in a process that requires ATP hydrolysis. Has a chymotrypsin-like activity. Plays a major role in the degradation of misfolded proteins. In Albidiferax ferrireducens (strain ATCC BAA-621 / DSM 15236 / T118) (Rhodoferax ferrireducens), this protein is ATP-dependent Clp protease proteolytic subunit.